The sequence spans 701 residues: C6 finger domain transcription factor nscR (701 aa).

A DNA-binding region (zn(2)-C6 fungal-type) is located at residues 17-43; sequence CELCRERKVKCDKLDPCTNCSSAGVIC.

Its subcellular location is the nucleus. Its function is as follows. Transcription factor that specifically regulates the neosartoricin B biosynthesis gene cluster. The sequence is that of C6 finger domain transcription factor nscR from Arthroderma benhamiae (strain ATCC MYA-4681 / CBS 112371) (Trichophyton mentagrophytes).